A 124-amino-acid polypeptide reads, in one-letter code: SPbeta prophage-derived uncharacterized protein YoqO (124 aa).

Transmembrane regions (helical) follow at residues Leu54–Phe74 and Val88–Met108.

Its subcellular location is the cell membrane. The sequence is that of SPbeta prophage-derived uncharacterized protein YoqO (yoqO) from Bacillus subtilis (strain 168).